The following is a 264-amino-acid chain: Thymidylate synthase (264 aa).

Residue Arg21 coordinates dUMP. Residue His51 participates in (6R)-5,10-methylene-5,6,7,8-tetrahydrofolate binding. 126-127 is a binding site for dUMP; it reads RR. Catalysis depends on Cys146, which acts as the Nucleophile. DUMP-binding positions include 166–169, Asn177, and 207–209; these read RSCD and HLY. A (6R)-5,10-methylene-5,6,7,8-tetrahydrofolate-binding site is contributed by Asp169. Ala263 is a binding site for (6R)-5,10-methylene-5,6,7,8-tetrahydrofolate.

This sequence belongs to the thymidylate synthase family. Bacterial-type ThyA subfamily. Homodimer.

It localises to the cytoplasm. The enzyme catalyses dUMP + (6R)-5,10-methylene-5,6,7,8-tetrahydrofolate = 7,8-dihydrofolate + dTMP. Its pathway is pyrimidine metabolism; dTTP biosynthesis. Catalyzes the reductive methylation of 2'-deoxyuridine-5'-monophosphate (dUMP) to 2'-deoxythymidine-5'-monophosphate (dTMP) while utilizing 5,10-methylenetetrahydrofolate (mTHF) as the methyl donor and reductant in the reaction, yielding dihydrofolate (DHF) as a by-product. This enzymatic reaction provides an intracellular de novo source of dTMP, an essential precursor for DNA biosynthesis. The polypeptide is Thymidylate synthase (Salmonella paratyphi C (strain RKS4594)).